The chain runs to 887 residues: Valine--tRNA ligase (887 aa).

The 'HIGH' region signature appears at proline 48–histidine 58. The short motif at lysine 527–serine 531 is the 'KMSKS' region element. Lysine 530 lines the ATP pocket. The stretch at leucine 814 to serine 887 forms a coiled coil.

The protein belongs to the class-I aminoacyl-tRNA synthetase family. ValS type 1 subfamily. Monomer.

Its subcellular location is the cytoplasm. The catalysed reaction is tRNA(Val) + L-valine + ATP = L-valyl-tRNA(Val) + AMP + diphosphate. Functionally, catalyzes the attachment of valine to tRNA(Val). As ValRS can inadvertently accommodate and process structurally similar amino acids such as threonine, to avoid such errors, it has a 'posttransfer' editing activity that hydrolyzes mischarged Thr-tRNA(Val) in a tRNA-dependent manner. The protein is Valine--tRNA ligase of Desulfotalea psychrophila (strain LSv54 / DSM 12343).